We begin with the raw amino-acid sequence, 360 residues long: Glucan endo-1,3-beta-glucosidase B (360 aa).

The first 25 residues, 1–25 (MATSQIAIIVLLGLLVATNIHITEA), serve as a signal peptide directing secretion. A Pyrrolidone carboxylic acid modification is found at glutamine 26. Residue glutamate 120 is the Proton donor of the active site. Residue glutamate 265 is the Nucleophile of the active site. The propeptide at 341–360 (VSERVWDITNSTASSLTSEI) is removed in mature form. N-linked (GlcNAc...) asparagine glycosylation is present at asparagine 350.

It belongs to the glycosyl hydrolase 17 family.

The protein resides in the vacuole. It catalyses the reaction Hydrolysis of (1-&gt;3)-beta-D-glucosidic linkages in (1-&gt;3)-beta-D-glucans.. Functionally, implicated in the defense of plants against pathogens. The sequence is that of Glucan endo-1,3-beta-glucosidase B from Solanum lycopersicum (Tomato).